The following is a 198-amino-acid chain: Holliday junction branch migration complex subunit RuvA (198 aa).

Residues 1–63 (MYDYIKGQLT…EDAHLLFGFH (63 aa)) are domain I. A domain II region spans residues 64–142 (TEDEKDVFLK…EAPQETGHTK (79 aa)). Residues 143-147 (ARSNK) form a flexible linker region. Residues 148–198 (AGNTQLDEAIEALLALGYKATELKKIRAFFEGTSETAEQYIKSALKLLMKG) are domain III.

This sequence belongs to the RuvA family. In terms of assembly, homotetramer. Forms an RuvA(8)-RuvB(12)-Holliday junction (HJ) complex. HJ DNA is sandwiched between 2 RuvA tetramers; dsDNA enters through RuvA and exits via RuvB. An RuvB hexamer assembles on each DNA strand where it exits the tetramer. Each RuvB hexamer is contacted by two RuvA subunits (via domain III) on 2 adjacent RuvB subunits; this complex drives branch migration. In the full resolvosome a probable DNA-RuvA(4)-RuvB(12)-RuvC(2) complex forms which resolves the HJ.

It is found in the cytoplasm. The RuvA-RuvB-RuvC complex processes Holliday junction (HJ) DNA during genetic recombination and DNA repair, while the RuvA-RuvB complex plays an important role in the rescue of blocked DNA replication forks via replication fork reversal (RFR). RuvA specifically binds to HJ cruciform DNA, conferring on it an open structure. The RuvB hexamer acts as an ATP-dependent pump, pulling dsDNA into and through the RuvAB complex. HJ branch migration allows RuvC to scan DNA until it finds its consensus sequence, where it cleaves and resolves the cruciform DNA. The sequence is that of Holliday junction branch migration complex subunit RuvA from Streptococcus pyogenes serotype M6 (strain ATCC BAA-946 / MGAS10394).